The sequence spans 238 residues: Flagellar L-ring protein (238 aa).

The signal sequence occupies residues 1 to 23 (MVKLFSYKIKYYLTAFFIIIIQS). C24 carries the N-palmitoyl cysteine lipid modification. Residue C24 is the site of S-diacylglycerol cysteine attachment.

This sequence belongs to the FlgH family. As to quaternary structure, the basal body constitutes a major portion of the flagellar organelle and consists of four rings (L,P,S, and M) mounted on a central rod.

The protein resides in the cell outer membrane. It localises to the bacterial flagellum basal body. In terms of biological role, assembles around the rod to form the L-ring and probably protects the motor/basal body from shearing forces during rotation. The sequence is that of Flagellar L-ring protein from Buchnera aphidicola subsp. Schizaphis graminum (strain Sg).